We begin with the raw amino-acid sequence, 482 residues long: Putative metabolite transport protein YfiG (482 aa).

Residues 1 to 29 (MSTKKKEAVIGKESLAHKGLLRTITLVST) lie on the Cytoplasmic side of the membrane. Residues 30-50 (FGGLLFGYDTGVINGALPFMA) form a helical membrane-spanning segment. The Extracellular segment spans residues 51–59 (TAGQLNLTP). Residues 60-80 (VTEGLVASSLLLGAAFGAMFG) traverse the membrane as a helical segment. Residues 81 to 92 (GRLSDRHGRRKT) are Cytoplasmic-facing. The chain crosses the membrane as a helical span at residues 93–113 (ILYLALLFIAATLGCTFSPNA). Residues 114-120 (SVMIAFR) lie on the Extracellular side of the membrane. The helical transmembrane segment at 121–141 (FLLGLAVGCASVTVPTFLAEI) threads the bilayer. Residues 142–155 (SPAERRGRIVTQNE) are Cytoplasmic-facing. A helical transmembrane segment spans residues 156 to 176 (LMIVIGQLLAYTFNAIIGSTM). Residues 177 to 184 (GESANVWR) lie on the Extracellular side of the membrane. Residues 185-205 (YMLVIATLPAVVLWFGMLIVP) traverse the membrane as a helical segment. Over 206–263 (ESPRWLAAKGRMGDALRVLRQIREDSQAQQEIKEIKHAIEGTAKKAGFHDFQEPWIRR) the chain is Cytoplasmic. A helical membrane pass occupies residues 264–284 (ILFIGIGIAIVQQITGVNSIM). The Extracellular portion of the chain corresponds to 285–301 (YYGTEILREAGFQTEAA). Residues 302–322 (LIGNIANGVISVIAVIFGIWL) traverse the membrane as a helical segment. The Cytoplasmic portion of the chain corresponds to 323 to 331 (LGKVRRRPM). The next 2 membrane-spanning stretches (helical) occupy residues 332-352 (LIIG…LSIV) and 353-373 (LEGT…FLAF). The Cytoplasmic portion of the chain corresponds to 374–400 (QQTAISTVTWLMLSEIFPMHVRGLGMG). Residues 401 to 421 (ISTFCLWTANFLIGFTFPILL) form a helical membrane-spanning segment. Residues 422 to 423 (NH) lie on the Extracellular side of the membrane. A helical transmembrane segment spans residues 424 to 444 (IGMSATFFIFVAMNILAILFV). The Cytoplasmic portion of the chain corresponds to 445-482 (KKYVPETKGRSLEQLEHSFRQYGRRADQEIQNQTTHLS).

Belongs to the major facilitator superfamily. Sugar transporter (TC 2.A.1.1) family.

It localises to the cell membrane. The sequence is that of Putative metabolite transport protein YfiG (yfiG) from Bacillus subtilis (strain 168).